An 873-amino-acid polypeptide reads, in one-letter code: Calmodulin-dependent glutamylase SidJ (873 aa).

Positions glutamine 16–proline 90 are disordered. The span at serine 22 to glycine 58 shows a compositional bias: polar residues. Residues aspartate 542 and aspartate 545 each coordinate Mg(2+). Positions asparagine 851–leucine 873 are disordered.

In terms of assembly, interacts with host calmodulin/CALM1; this interaction is required for glutamylase activity. Mg(2+) serves as cofactor.

It carries out the reaction L-glutamyl-[protein] + L-glutamate + ATP = gamma-L-glutamyl-L-glutamyl-[protein] + ADP + phosphate + H(+). The enzyme catalyses (L-glutamyl)(n)-gamma-L-glutamyl-L-glutamyl-[protein] + L-glutamate + ATP = (L-glutamyl)(n+1)-gamma-L-glutamyl-L-glutamyl-[protein] + ADP + phosphate + H(+). Glytamylation catalyzed by SidJ requires host calmodulin and can be regulated by intracellular changes in Ca2+ concentrations. Also requires ATP. In terms of biological role, glutamylase that mediates the covalent attachment of glutamate moieties to SdeA on one of the catalytic residues that is required for its mono-ADP-ribosyltransferase activity. In turn, inhibits SdeA ubiquitinating activity. Also glutamylates related SdeB, SdeC and SidE. Glutamylase activity only occurs in the host since it requires host calmodulin. May also reverse the SdeA-mediated substrate ubiquitination by cleaving the phosphodiester bond that links phosphoribosylated ubiquitin to protein substrates via its deubiquitinase activity. This is Calmodulin-dependent glutamylase SidJ from Legionella pneumophila subsp. pneumophila (strain Philadelphia 1 / ATCC 33152 / DSM 7513).